A 274-amino-acid chain; its full sequence is MAVKKIRPLTPGQRFRIAPDFSVLTKTKPEKSLLLPIKSTGGRNNTGKMTIRYKGGGHKKRMRIIDFKRRKYDIPAVVNSIQYDPMRTAYIALLYYVDGAKSYIIAPEGLKVGDRVLSGNNIAPEVGNAMPLRTMPTGTIVHNIELHPGRGAAMARSAGTYAQLLAKEERYVTLKLPSGEMRMVLGECMATVGTVSNSEHNNIVLGKAGRNRWLGRRPRVRGVAMNPVDHPMGGGEGKASGGHPRSRTGLYAKGKKTRNTNKYSKNYILSRKKR.

The segment at 223–274 (VAMNPVDHPMGGGEGKASGGHPRSRTGLYAKGKKTRNTNKYSKNYILSRKKR) is disordered.

Belongs to the universal ribosomal protein uL2 family. Part of the 50S ribosomal subunit. Forms a bridge to the 30S subunit in the 70S ribosome.

Its function is as follows. One of the primary rRNA binding proteins. Required for association of the 30S and 50S subunits to form the 70S ribosome, for tRNA binding and peptide bond formation. It has been suggested to have peptidyltransferase activity; this is somewhat controversial. Makes several contacts with the 16S rRNA in the 70S ribosome. This is Large ribosomal subunit protein uL2 from Amoebophilus asiaticus (strain 5a2).